The following is an 842-amino-acid chain: Protein translocase subunit SecA (842 aa).

ATP contacts are provided by residues Gln91, 109–113 (GEGKT), and Asp498. The span at 798–824 (QGQHVSAEDGKEKVKPQPVVKDNHIGR) shows a compositional bias: basic and acidic residues. The interval 798–827 (QGQHVSAEDGKEKVKPQPVVKDNHIGRNDP) is disordered. Residues Cys828, Cys830, Cys839, and Cys840 each coordinate Zn(2+).

Belongs to the SecA family. In terms of assembly, monomer and homodimer. Part of the essential Sec protein translocation apparatus which comprises SecA, SecYEG and auxiliary proteins SecDF. Other proteins may also be involved. Requires Zn(2+) as cofactor.

The protein localises to the cell membrane. The protein resides in the cytoplasm. It carries out the reaction ATP + H2O + cellular proteinSide 1 = ADP + phosphate + cellular proteinSide 2.. Functionally, part of the Sec protein translocase complex. Interacts with the SecYEG preprotein conducting channel. Has a central role in coupling the hydrolysis of ATP to the transfer of proteins into and across the cell membrane, serving as an ATP-driven molecular motor driving the stepwise translocation of polypeptide chains across the membrane. This chain is Protein translocase subunit SecA, found in Staphylococcus carnosus (strain TM300).